The chain runs to 103 residues: Large ribosomal subunit protein bL21 (103 aa).

Belongs to the bacterial ribosomal protein bL21 family. In terms of assembly, part of the 50S ribosomal subunit. Contacts protein L20.

In terms of biological role, this protein binds to 23S rRNA in the presence of protein L20. The sequence is that of Large ribosomal subunit protein bL21 from Verminephrobacter eiseniae (strain EF01-2).